A 407-amino-acid chain; its full sequence is Proteasome-activating nucleotidase (407 aa).

The stretch at 22 to 67 forms a coiled coil; sequence KEKAYLAELESKVLRLELKNKDITRENVQIKKENEILKRELDKLRI. Residues 192-197 and H331 each bind ATP; that span reads GTGKTL. Positions 405–407 are docks into pockets in the proteasome alpha-ring to cause gate opening; it reads MYG.

This sequence belongs to the AAA ATPase family. Homohexamer. The hexameric complex has a two-ring architecture resembling a top hat that caps the 20S proteasome core at one or both ends. Upon ATP-binding, the C-terminus of PAN interacts with the alpha-rings of the proteasome core by binding to the intersubunit pockets.

The protein resides in the cytoplasm. Its function is as follows. ATPase which is responsible for recognizing, binding, unfolding and translocation of substrate proteins into the archaeal 20S proteasome core particle. Is essential for opening the gate of the 20S proteasome via an interaction with its C-terminus, thereby allowing substrate entry and access to the site of proteolysis. Thus, the C-termini of the proteasomal ATPase function like a 'key in a lock' to induce gate opening and therefore regulate proteolysis. Unfolding activity requires energy from ATP hydrolysis, whereas ATP binding alone promotes ATPase-20S proteasome association which triggers gate opening, and supports translocation of unfolded substrates. This chain is Proteasome-activating nucleotidase, found in Methanococcus vannielii (strain ATCC 35089 / DSM 1224 / JCM 13029 / OCM 148 / SB).